The sequence spans 323 residues: tRNA dimethylallyltransferase (323 aa).

ATP is bound at residue 12 to 19 (GPTAAGKT). 14–19 (TAAGKT) contributes to the substrate binding site. Interaction with substrate tRNA regions lie at residues 37-40 (DSAL) and 161-165 (QRLSR).

This sequence belongs to the IPP transferase family. In terms of assembly, monomer. The cofactor is Mg(2+).

The enzyme catalyses adenosine(37) in tRNA + dimethylallyl diphosphate = N(6)-dimethylallyladenosine(37) in tRNA + diphosphate. Functionally, catalyzes the transfer of a dimethylallyl group onto the adenine at position 37 in tRNAs that read codons beginning with uridine, leading to the formation of N6-(dimethylallyl)adenosine (i(6)A). In Pseudomonas fluorescens (strain Pf0-1), this protein is tRNA dimethylallyltransferase.